Here is a 609-residue protein sequence, read N- to C-terminus: Hemagglutinin glycoprotein (609 aa).

The Intravirion portion of the chain corresponds to 1–34 (MSSPRDRVNAFYKDNLQFKNTRVVLNKEQLLIER). Residues 35 to 58 (PYMLLAVLFVMFLSLVGLLAIAGI) traverse the membrane as a helical; Signal-anchor for type II membrane protein segment. Residues 59-609 (RLHRAAVNTA…VGIEITCNSR (551 aa)) are Virion surface-facing. N-linked (GlcNAc...) asparagine; by host glycans are attached at residues N168, N200, N215, and N395.

It belongs to the paramyxoviruses hemagglutinin-neuraminidase family. Non-sialidase subfamily.

The protein localises to the virion membrane. Its subcellular location is the host membrane. In terms of biological role, attaches the virus to cell receptors and thereby initiating infection. Binding of H protein to the receptor induces a conformational change that allows the F protein to trigger virion/cell membranes fusion. Down-regulates human MCP/CD46 cell surface expression. In Rinderpest virus (strain L) (RDV), this protein is Hemagglutinin glycoprotein (H).